Consider the following 382-residue polypeptide: Mannitol-1-phosphate 5-dehydrogenase (382 aa).

Position 3–14 (3–14) interacts with NAD(+); the sequence is ALHFGAGNIGRG. An N6-acetyllysine modification is found at lysine 269.

The protein belongs to the mannitol dehydrogenase family. Monomer.

It catalyses the reaction D-mannitol 1-phosphate + NAD(+) = beta-D-fructose 6-phosphate + NADH + H(+). The protein is Mannitol-1-phosphate 5-dehydrogenase of Escherichia coli O157:H7.